The sequence spans 210 residues: Silenced mating-type protein ALPHA2 (210 aa).

Methionine 1 is subject to N-acetylmethionine. Residues 1-102 (MNKIPIKDLL…RSIENDRSNY (102 aa)) form an N-terminal domain region. The flexible linker stretch occupies residues 103–128 (QLTQKNKSADGLVFNVVTQDMINKST). The segment at residues 129–191 (KPYRGHRFTK…NRRRKEKTIT (63 aa)) is a DNA-binding region (homeobox; TALE-type). Positions 190–210 (ITIAPELADLLSGEPLAKKKE) are C-terminal tail.

Belongs to the TALE/M-ATYP homeobox family.

The protein localises to the nucleus. In terms of biological role, mating type proteins are sequence specific DNA-binding proteins that act as master switches in yeast differentiation by controlling gene expression in a cell type-specific fashion. Silenced copy of ALPHA2 at HML. In Saccharomyces cerevisiae (strain ATCC 204508 / S288c) (Baker's yeast), this protein is Silenced mating-type protein ALPHA2 (HMLALPHA2).